A 51-amino-acid chain; its full sequence is Large ribosomal subunit protein eL39 (51 aa).

The protein belongs to the eukaryotic ribosomal protein eL39 family. As to quaternary structure, interacts with IMPACT.

The sequence is that of Large ribosomal subunit protein eL39 (RPL39) from Gallus gallus (Chicken).